A 1041-amino-acid polypeptide reads, in one-letter code: DNA polymerase catalytic subunit (1041 aa).

Positions 1–23 (MAFFNPYFKSKNKGSDMPPKQSM) are disordered.

The protein belongs to the DNA polymerase type-B family.

It localises to the host nucleus. It carries out the reaction DNA(n) + a 2'-deoxyribonucleoside 5'-triphosphate = DNA(n+1) + diphosphate. It catalyses the reaction Endonucleolytic cleavage to 5'-phosphomonoester.. Its function is as follows. Replicates viral genomic DNA. The replication complex is composed of six viral proteins: the DNA polymerase, processivity factor, primase, primase-associated factor, helicase, and ssDNA-binding protein. Additionally, the polymerase contains an intrinsic ribonuclease H (RNase H) activity that specifically degrades RNA/DNA heteroduplexes or duplex DNA substrates in the 5' to 3' direction. Therefore, it can catalyze the excision of the RNA primers that initiate the synthesis of Okazaki fragments at a replication fork during viral DNA replication. The protein is DNA polymerase catalytic subunit of Elephantid herpesvirus 1 (isolate Asian elephant/Berlin/Kiba/1998) (EIHV-1).